The following is a 947-amino-acid chain: Receptor-like protein 56 (947 aa).

Positions 1-27 are cleaved as a signal peptide; it reads MEGKVFSGQKLILVMLLLGHLHGFSSC. At 28–899 the chain is on the extracellular side; the sequence is IEKERKALLE…EDDKEVAIDM (872 aa). 3 N-linked (GlcNAc...) asparagine glycosylation sites follow: N60, N75, and N98. LRR repeat units lie at residues 105–128, 134–157, 159–182, 183–207, 209–232, 233–257, 259–281, 282–305, and 307–330; these read FEEV…VEGY, LRNL…FLNA, TSLT…ELKN, LTNL…EFPY, KKLK…GLKN, LTNL…VFCE, KNLQ…CFGN, LNKL…SFSS, and ESLE…PLTN. N-linked (GlcNAc...) asparagine glycans are attached at residues N141, N148, and N182. An N-linked (GlcNAc...) asparagine glycan is attached at N232. N-linked (GlcNAc...) asparagine glycosylation is present at N330. An LRR 10; degenerate repeat occupies 332–356; that stretch reads TKLKVFIFSSKDDMVQVKIESTWQP. LRR repeat units follow at residues 357 to 380, 381 to 404, 405 to 427, 428 to 450, 452 to 476, 477 to 500, 502 to 527, 529 to 549, 550 to 575, 577 to 598, 600 to 616, 617 to 640, 642 to 663, 664 to 686, 757 to 780, 781 to 804, 805 to 829, and 831 to 854; these read LFQL…LMYQ, KNLH…LLEN, NPEL…PTSV, HNLQ…NFGR, LPNL…MGEM, YNIS…FVSS, FSLS…NFTS, IVLR…LLTL, VDLC…VFEY, NFLD…SLDN, LFLH…DTFL, GSIQ…VDTQ, ISFL…LCEF, SKMR…CFNN, LNSM…ELGD, LFKL…SFSK, LQDI…LTNL, and SLAI…QFNT. N415 carries N-linked (GlcNAc...) asparagine glycosylation. N-linked (GlcNAc...) asparagine glycans are attached at residues N459, N478, N488, and N524. N606 is a glycosylation site (N-linked (GlcNAc...) asparagine). The N-linked (GlcNAc...) asparagine glycan is linked to N686. N788, N828, N836, and N841 each carry an N-linked (GlcNAc...) asparagine glycan. A helical transmembrane segment spans residues 900–920; the sequence is LVFYWSTAGTYVTALIGILVL. The Cytoplasmic portion of the chain corresponds to 921–947; the sequence is MCVDCSWRRAWLRLVDAFIASAKSKLA.

This sequence belongs to the RLP family.

The protein resides in the cell membrane. This Arabidopsis thaliana (Mouse-ear cress) protein is Receptor-like protein 56.